Consider the following 765-residue polypeptide: ATP-dependent RNA helicase DBP4 (765 aa).

The segment covering 1 to 14 has biased composition (basic residues); the sequence is MAKPRRNNKNKKGQ. Residues 1 to 24 form a disordered region; it reads MAKPRRNNKNKKGQSRSQAREKEE. Residues 47-75 carry the Q motif motif; sequence SQFSDLPITQETLRGLNESSFMSLTDIQK. The region spanning 78 to 252 is the Helicase ATP-binding domain; that stretch reads IPIALKGEDL…RLSLTNPKRI (175 aa). 91-98 contacts ATP; that stretch reads ARTGSGKT. The DEAD box signature appears at 200–203; that stretch reads DEAD. A Helicase C-terminal domain is found at 266–438; sequence SLDQYYIRIP…SIRPQLQSLC (173 aa). Disordered stretches follow at residues 493 to 526, 552 to 576, and 641 to 735; these read KGGS…NEAS, NGSQ…RKDH, and KEQK…DKHN. A compositionally biased stretch (acidic residues) spans 558 to 568; that stretch reads EDEDEEEEDDF. 2 stretches are compositionally biased toward basic and acidic residues: residues 641-653 and 678-688; these read KEQK…RETE and KEVEKRMRDEE.

This sequence belongs to the DEAD box helicase family. DDX10/DBP4 subfamily. Interacts with the U3 and U14 snoRNAs. Associates with pre-ribosomal complexes.

The protein resides in the nucleus. Its subcellular location is the nucleolus. The catalysed reaction is ATP + H2O = ADP + phosphate + H(+). In terms of biological role, ATP-dependent RNA helicase required for ribosome biogenesis. Involved in the release of U14 snoRNA in pre-ribosomal complexes. Required for pre-rRNA cleavage at site A2. This chain is ATP-dependent RNA helicase DBP4 (DBP4), found in Scheffersomyces stipitis (strain ATCC 58785 / CBS 6054 / NBRC 10063 / NRRL Y-11545) (Yeast).